The chain runs to 722 residues: Polyribonucleotide nucleotidyltransferase (722 aa).

Asp-498 and Asp-504 together coordinate Mg(2+). Positions 565-624 (PQFHTMKIDPDKIRDIIGKGGATIRSITEETGASIDIDDNGTIKIYADDGDGMQAAIARI) constitute a KH domain. One can recognise an S1 motif domain in the interval 634 to 702 (GAVYQGKVVR…QRGRIKLSIK (69 aa)).

This sequence belongs to the polyribonucleotide nucleotidyltransferase family. Component of the RNA degradosome, which is a multiprotein complex involved in RNA processing and mRNA degradation. The cofactor is Mg(2+).

The protein resides in the cytoplasm. The catalysed reaction is RNA(n+1) + phosphate = RNA(n) + a ribonucleoside 5'-diphosphate. Its function is as follows. Involved in mRNA degradation. Catalyzes the phosphorolysis of single-stranded polyribonucleotides processively in the 3'- to 5'-direction. The chain is Polyribonucleotide nucleotidyltransferase from Saccharophagus degradans (strain 2-40 / ATCC 43961 / DSM 17024).